Reading from the N-terminus, the 690-residue chain is Eukaryotic translation initiation factor 3 subunit B (690 aa).

Over residues methionine 1–glycine 11 the composition is skewed to basic and acidic residues. Residues methionine 1 to serine 36 form a disordered region. Positions asparagine 15–phenylalanine 25 are enriched in acidic residues. The region spanning serine 57–aspartate 141 is the RRM domain. WD repeat units follow at residues threonine 207–lysine 246, aspartate 293–leucine 331, isoleucine 334–glutamate 369, glutamate 442–leucine 484, and proline 530–threonine 575. Residues glutamate 595–arginine 645 adopt a coiled-coil conformation.

This sequence belongs to the eIF-3 subunit B family. As to quaternary structure, component of the eukaryotic translation initiation factor 3 (eIF-3) complex. The eIF-3 complex interacts with pix. Interacts with mxt.

It localises to the cytoplasm. Its function is as follows. RNA-binding component of the eukaryotic translation initiation factor 3 (eIF-3) complex, which is involved in protein synthesis of a specialized repertoire of mRNAs and, together with other initiation factors, stimulates binding of mRNA and methionyl-tRNAi to the 40S ribosome. The eIF-3 complex specifically targets and initiates translation of a subset of mRNAs involved in cell proliferation. The chain is Eukaryotic translation initiation factor 3 subunit B from Drosophila yakuba (Fruit fly).